The primary structure comprises 330 residues: Aspartate--ammonia ligase (330 aa).

The protein belongs to the class-II aminoacyl-tRNA synthetase family. AsnA subfamily.

It is found in the cytoplasm. The catalysed reaction is L-aspartate + NH4(+) + ATP = L-asparagine + AMP + diphosphate + H(+). Its pathway is amino-acid biosynthesis; L-asparagine biosynthesis; L-asparagine from L-aspartate (ammonia route): step 1/1. In Streptococcus pneumoniae serotype 2 (strain D39 / NCTC 7466), this protein is Aspartate--ammonia ligase.